The chain runs to 98 residues: Hainantoxin-XVII-2 (98 aa).

The first 40 residues, 1 to 40 (MTTVGVSLFRRSPEKITMKIATFLGLSFLLIASYVLICEA), serve as a signal peptide directing secretion. The propeptide occupies 41 to 64 (QHPGFQELLILEENMRDPENSKER). Disulfide bonds link Cys-66–Cys-81 and Cys-73–Cys-85.

This sequence belongs to the hainantoxin family. 17 subfamily. As to expression, expressed by the venom gland.

The protein resides in the secreted. Functionally, putative ion channel inhibitor. The chain is Hainantoxin-XVII-2 from Cyriopagopus hainanus (Chinese bird spider).